The chain runs to 385 residues: Heptahelical transmembrane protein 4 (385 aa).

Basic and acidic residues predominate over residues 1–12; the sequence is MGDEAEIKEHLK. The disordered stretch occupies residues 1 to 22; sequence MGDEAEIKEHLKPQASSETMDK. Over 1–79 the chain is Cytoplasmic; it reads MGDEAEIKEH…LSIFTIHNET (79 aa). The chain crosses the membrane as a helical span at residues 80 to 100; sequence LNVWTHLIGFFLFLALTIYTA. Residues 101–191 lie on the Extracellular side of the membrane; it reads TKVPSVVDLH…LIFRPITRWP (91 aa). Residues 192–212 form a helical membrane-spanning segment; that stretch reads FYAFLGGAMFCLLASSTCHLL. Residues 213-228 are Cytoplasmic-facing; sequence SCHSERVSYIMLRLDY. The helical transmembrane segment at 229 to 249 threads the bilayer; sequence AGIAALIATSFYPPVYYSFMC. Residues 250 to 256 lie on the Extracellular side of the membrane; sequence DPFFCNL. A helical transmembrane segment spans residues 257 to 277; that stretch reads YLGFITILGIATVLVSLLPVF. Over 278 to 288 the chain is Cytoplasmic; the sequence is QSPEFRVVRAS. A helical transmembrane segment spans residues 289–309; sequence LFFGMGFSGLAPILHKLIIFW. Over 310 to 313 the chain is Extracellular; sequence DQPE. A helical transmembrane segment spans residues 314–334; that stretch reads ALHTTGYEILMGLLYGLGALV. Residues 335 to 356 are Cytoplasmic-facing; sequence YATRIPERWMPGKFDIAGHSHQ. Residues 357 to 377 form a helical membrane-spanning segment; that stretch reads LFHVLVVAGAFTHYRAGLVYL.

It belongs to the ADIPOR family. In terms of tissue distribution, expressed in roots, leaves, stems and flowers.

Its subcellular location is the membrane. Functionally, may play a role in abiotic stress response. The protein is Heptahelical transmembrane protein 4 (HHP4) of Arabidopsis thaliana (Mouse-ear cress).